We begin with the raw amino-acid sequence, 277 residues long: Ras suppressor protein 1 (277 aa).

Residues 1–23 (MSKSLKKLVEESREKNQPEVDMS) are disordered. At serine 2 the chain carries N-acetylserine. A compositionally biased stretch (basic and acidic residues) spans 7 to 23 (KLVEESREKNQPEVDMS). 7 LRR repeats span residues 41–63 (HITQ…AELK), 64–85 (NLEV…ISSL), 87–109 (KLKH…GSLP), 110–133 (ALEV…FFYL), 135–156 (TLRA…IGKL), 158–179 (KLQI…IGEL), and 181–202 (QLKE…LGNL). The interval 250 to 277 (MQANPEPPKKNNDKSKKISRKPLAAKNK) is disordered. Positions 256–265 (PPKKNNDKSK) are enriched in basic and acidic residues.

Its function is as follows. Potentially plays a role in the Ras signal transduction pathway. Capable of suppressing v-Ras transformation in vitro. This Bos taurus (Bovine) protein is Ras suppressor protein 1 (RSU1).